The chain runs to 110 residues: UPF0339 protein SO_3888 (110 aa).

2 consecutive repeat copies span residues Ser10–Lys58 and Ala61–Leu109.

This sequence belongs to the UPF0339 family. Duplicated subfamily.

This Shewanella oneidensis (strain ATCC 700550 / JCM 31522 / CIP 106686 / LMG 19005 / NCIMB 14063 / MR-1) protein is UPF0339 protein SO_3888.